A 308-amino-acid chain; its full sequence is Ribosomal RNA small subunit methyltransferase H (308 aa).

S-adenosyl-L-methionine-binding positions include 36 to 38, Asp55, Phe86, Asp103, and Gln110; that span reads GGH.

The protein belongs to the methyltransferase superfamily. RsmH family.

The protein localises to the cytoplasm. The enzyme catalyses cytidine(1402) in 16S rRNA + S-adenosyl-L-methionine = N(4)-methylcytidine(1402) in 16S rRNA + S-adenosyl-L-homocysteine + H(+). Its function is as follows. Specifically methylates the N4 position of cytidine in position 1402 (C1402) of 16S rRNA. The sequence is that of Ribosomal RNA small subunit methyltransferase H from Helicobacter pylori (strain G27).